A 2446-amino-acid polypeptide reads, in one-letter code: Transcription factor HIVEP2 (2446 aa).

The tract at residues 1–93 (MDTGDTALGQ…YPPHRPSPYS (93 aa)) is disordered. Residues 17–28 (GETDKASGRWRQ) are compositionally biased toward basic and acidic residues. 2 C2H2-type zinc fingers span residues 189–211 (YICP…IRSH) and 217–239 (YPCI…RKSH). Disordered regions lie at residues 272 to 303 (HSDG…PIPL), 340 to 416 (ESSQ…PPNT), 543 to 563 (SNSV…LRGS), and 751 to 985 (SHGH…SFER). 2 stretches are compositionally biased toward polar residues: residues 381–416 (SEPS…PPNT) and 543–556 (SNSV…NLTI). The segment covering 751-760 (SHGHTERFDP) has biased composition (basic and acidic residues). Positions 766-777 (QPGSPSLVSEES) are enriched in polar residues. The span at 782-791 (DSDKMSDLGG) shows a compositional bias: basic and acidic residues. Over residues 800–812 (SVIQHTNSLSRPN) the composition is skewed to polar residues. The residue at position 819 (S819) is a Phosphoserine. Over residues 863–878 (PSPSQQVQQQSYHTQP) the composition is skewed to low complexity. The segment covering 892-916 (RVTEEPDKPEKEKEAQSKEPEKPVE) has biased composition (basic and acidic residues). Positions 937–943 (PKKKRLR) match the Nuclear localization signal motif. Phosphoserine is present on residues S950, S955, S1048, S1443, and S1447. Positions 952-982 (GESSFESTGTGLSRSPSQESNLSHSSSFSMS) are enriched in low complexity. Residues 1485-1603 (KDLSRPQKPQ…LEEEGKGHKR (119 aa)) are disordered. Composition is skewed to low complexity over residues 1510-1533 (SGSS…SPSS) and 1576-1586 (SDMSMSPQSSS). 2 consecutive C2H2-type zinc fingers follow at residues 1799-1821 (YICE…IRTH) and 1827-1851 (YVCK…SKAH). Disordered stretches follow at residues 1882 to 1951 (AAEK…VNVG) and 2024 to 2129 (EECM…RRDL). Over residues 1899–1925 (DAEESDGEDGDDNDDDDEDEDDFDDQG) the composition is skewed to acidic residues. Positions 2029-2053 (PSEPSSSPRDFSPSSHHSSPGYDSS) are enriched in low complexity. Repeat copies occupy residues 2053 to 2056 (SPCR), 2059 to 2062 (SPKR), 2071 to 2074 (SPRR), 2083 to 2086 (SPMR), 2089 to 2092 (SPRK), 2106 to 2109 (SPRR), 2112 to 2115 (SPRR), 2118 to 2121 (SPGK), 2130 to 2133 (SPRR), and 2145 to 2148 (SPRR). A 10 X 4 AA tandem repeats of S-P-[RGMKC]-[RK] region spans residues 2053 to 2148 (SPCRDNSPKR…TTIRAPSPRR (96 aa)). A compositionally biased stretch (basic and acidic residues) spans 2078–2107 (PRRDLSPMRHLSPRKEAALRREMSQRDVSP). The residue at position 2118 (S2118) is a Phosphoserine. 3 disordered regions span residues 2242–2325 (PALS…QEEN), 2371–2403 (HFSR…SQTP), and 2423–2446 (HSSK…SQLH). Phosphoserine is present on residues S2297 and S2301. Polar residues predominate over residues 2307–2317 (KQSTSEDSLNA). Basic and acidic residues predominate over residues 2387–2396 (PDLHDGEKDN). S2429 and S2431 each carry phosphoserine. The span at 2433-2446 (EESKDPSSEKSQLH) shows a compositional bias: basic and acidic residues.

In terms of assembly, interacts with TCF4. Expressed in brain and skeletal muscle.

It localises to the nucleus. Its function is as follows. This protein specifically binds to the DNA sequence 5'-GGGACTTTCC-3' which is found in the enhancer elements of numerous viral promoters such as those of SV40, CMV, or HIV1. In addition, related sequences are found in the enhancer elements of a number of cellular promoters, including those of the class I MHC, interleukin-2 receptor, somatostatin receptor II, and interferon-beta genes. It may act in T-cell activation. The polypeptide is Transcription factor HIVEP2 (HIVEP2) (Homo sapiens (Human)).